The following is a 233-amino-acid chain: Lipoprotein-releasing system ATP-binding protein LolD (233 aa).

Positions 6-233 (LQCDNLCKRY…TAELSLMGAE (228 aa)) constitute an ABC transporter domain. 42-49 (GSSGSGKS) provides a ligand contact to ATP.

The protein belongs to the ABC transporter superfamily. Lipoprotein translocase (TC 3.A.1.125) family. In terms of assembly, the complex is composed of two ATP-binding proteins (LolD) and two transmembrane proteins (LolC and LolE).

The protein localises to the cell inner membrane. Part of the ABC transporter complex LolCDE involved in the translocation of mature outer membrane-directed lipoproteins, from the inner membrane to the periplasmic chaperone, LolA. Responsible for the formation of the LolA-lipoprotein complex in an ATP-dependent manner. This is Lipoprotein-releasing system ATP-binding protein LolD from Salmonella paratyphi A (strain ATCC 9150 / SARB42).